Here is a 384-residue protein sequence, read N- to C-terminus: D-galactosamine-6-phosphate deaminase AgaS (384 aa).

SIS domains lie at 45-197 (LEPL…SQTF) and 215-364 (SEGV…PDTP).

Belongs to the SIS family. AgaS subfamily.

It catalyses the reaction D-galactosamine 6-phosphate + H2O = D-tagatopyranose 1-phosphate + NH4(+). Catalyzes the isomerization-deamination of galactosamine 6-phosphate to form tagatofuranose 6-phosphate and ammonium ion. This is D-galactosamine-6-phosphate deaminase AgaS from Escherichia coli O157:H7.